The sequence spans 93 residues: Small ribosomal subunit protein uS19 (93 aa).

This sequence belongs to the universal ribosomal protein uS19 family.

Its function is as follows. Protein S19 forms a complex with S13 that binds strongly to the 16S ribosomal RNA. The protein is Small ribosomal subunit protein uS19 of Syntrophus aciditrophicus (strain SB).